Reading from the N-terminus, the 476-residue chain is Aspartyl/glutamyl-tRNA(Asn/Gln) amidotransferase subunit B (476 aa).

It belongs to the GatB/GatE family. GatB subfamily. As to quaternary structure, heterotrimer of A, B and C subunits.

The catalysed reaction is L-glutamyl-tRNA(Gln) + L-glutamine + ATP + H2O = L-glutaminyl-tRNA(Gln) + L-glutamate + ADP + phosphate + H(+). The enzyme catalyses L-aspartyl-tRNA(Asn) + L-glutamine + ATP + H2O = L-asparaginyl-tRNA(Asn) + L-glutamate + ADP + phosphate + 2 H(+). Functionally, allows the formation of correctly charged Asn-tRNA(Asn) or Gln-tRNA(Gln) through the transamidation of misacylated Asp-tRNA(Asn) or Glu-tRNA(Gln) in organisms which lack either or both of asparaginyl-tRNA or glutaminyl-tRNA synthetases. The reaction takes place in the presence of glutamine and ATP through an activated phospho-Asp-tRNA(Asn) or phospho-Glu-tRNA(Gln). This is Aspartyl/glutamyl-tRNA(Asn/Gln) amidotransferase subunit B from Bacillus cytotoxicus (strain DSM 22905 / CIP 110041 / 391-98 / NVH 391-98).